The primary structure comprises 233 residues: Large ribosomal subunit protein eL6x (233 aa).

Over residues 48-72 (HDAKSKVDAPVEKPPKFYPAEDVKK) the composition is skewed to basic and acidic residues. A disordered region spans residues 48–80 (HDAKSKVDAPVEKPPKFYPAEDVKKPLPNRRTA).

Belongs to the eukaryotic ribosomal protein eL6 family.

This is Large ribosomal subunit protein eL6x (RPL6C) from Arabidopsis thaliana (Mouse-ear cress).